The following is a 369-amino-acid chain: Anhydro-N-acetylmuramic acid kinase (369 aa).

Position 12 to 19 (12 to 19) interacts with ATP; it reads GTSMDGVD.

Belongs to the anhydro-N-acetylmuramic acid kinase family.

The catalysed reaction is 1,6-anhydro-N-acetyl-beta-muramate + ATP + H2O = N-acetyl-D-muramate 6-phosphate + ADP + H(+). Its pathway is amino-sugar metabolism; 1,6-anhydro-N-acetylmuramate degradation. It functions in the pathway cell wall biogenesis; peptidoglycan recycling. In terms of biological role, catalyzes the specific phosphorylation of 1,6-anhydro-N-acetylmuramic acid (anhMurNAc) with the simultaneous cleavage of the 1,6-anhydro ring, generating MurNAc-6-P. Is required for the utilization of anhMurNAc either imported from the medium or derived from its own cell wall murein, and thus plays a role in cell wall recycling. This chain is Anhydro-N-acetylmuramic acid kinase, found in Shewanella loihica (strain ATCC BAA-1088 / PV-4).